Here is a 560-residue protein sequence, read N- to C-terminus: Cilia- and flagella-associated protein 184 (560 aa).

The segment covering 1–12 (MEGGSEHTKDPG) has biased composition (basic and acidic residues). The segment at 1-209 (MEGGSEHTKD…QEEGKPLGGR (209 aa)) is disordered. 2 stretches are compositionally biased toward acidic residues: residues 41–61 (GELE…EEEA) and 101–110 (EPEEPAEAGA). Basic and acidic residues-rich tracts occupy residues 127–144 (AEAR…KEVR) and 179–209 (ETRR…LGGR). Coiled coils occupy residues 357 to 481 (QAAL…QGRD) and 510 to 536 (DSLL…LKRH).

Belongs to the CFAP184 family. As to quaternary structure, forms a complex with CFAP263; the interaction is required for functional activity in cilia.

Its subcellular location is the cell projection. The protein resides in the cilium. It is found in the cytoplasm. The protein localises to the cytoskeleton. It localises to the microtubule organizing center. Its subcellular location is the centrosome. In complex with CFAP263, acts as a regulator of ciliary beating that connects radial spoke 3 (RS3) to the inner dynein arm (IDA) and the nexin-dynein regulatory complex (N-DRC). The complex is positioned parallel to N-DRC and forms a connection between the arch at the base of RS3, the IDA tail and N-DRC. This chain is Cilia- and flagella-associated protein 184 (CFAP184), found in Macaca fascicularis (Crab-eating macaque).